A 68-amino-acid chain; its full sequence is Conotoxin Cal12.1p3 (68 aa).

Residues 1 to 21 (DLITNSYTRGKPRHVTSWPKL) constitute a propeptide that is removed on maturation.

Post-translationally, contains 4 disulfide bonds. As to expression, expressed by the venom duct.

The protein localises to the secreted. This is Conotoxin Cal12.1p3 from Californiconus californicus (California cone).